The following is an 888-amino-acid chain: Kinesin-like protein KIF20A (888 aa).

Position 2 is an N-acetylserine (Ser2). Ser7, Ser14, and Ser21 each carry phosphoserine. The Kinesin motor domain occupies 63-506 (KVKVYLRVRP…AKFSAIASQL (444 aa)). ATP is bound at residue 159 to 166 (GVTNSGKT). Ser527 is modified (phosphoserine; by PLK1). Phosphoserine is present on Ser531. Coiled-coil stretches lie at residues 559–587 (KEEL…EVQL) and 630–760 (ESLT…ERAC). Residues Ser667, Ser683, and Ser823 each carry the phosphoserine modification. The tract at residues 761–888 (CHNTGAGKLR…LKSGPFGKKY (128 aa)) is globular. Positions 823–863 (STKKRLGANQENQQPNQQPPGKKPFLRNLLPRTPTCQSSTD) are disordered. A Phosphothreonine modification is found at Thr855. Residues Ser865, Ser876, and Ser881 each carry the phosphoserine modification.

Belongs to the TRAFAC class myosin-kinesin ATPase superfamily. Kinesin family. Post-translationally, phosphorylated by PLK1 at Ser-527 during mitosis, creating a docking site for PLK1 and recruiting PLK1 at central spindle.

The protein resides in the golgi apparatus. The protein localises to the cytoplasm. It is found in the cytoskeleton. It localises to the spindle. Mitotic kinesin required for chromosome passenger complex (CPC)-mediated cytokinesis. Following phosphorylation by PLK1, involved in recruitment of PLK1 to the central spindle. Interacts with guanosine triphosphate (GTP)-bound forms of RAB6A and RAB6B. May act as a motor required for the retrograde RAB6 regulated transport of Golgi membranes and associated vesicles along microtubules. Has a microtubule plus end-directed motility. The polypeptide is Kinesin-like protein KIF20A (KIF20A) (Bos taurus (Bovine)).